We begin with the raw amino-acid sequence, 4307 residues long: Cytoplasmic dynein 2 heavy chain 1 (4307 aa).

Residues 1–1650 (MANGTADVRK…CVQMVDSEFQ (1650 aa)) are stem. 145-152 (LGIVLRRS) lines the ATP pocket. A coiled-coil region spans residues 1074-1103 (NTLDKSAKLIKEKKIEFDDLEVTRKKLVDD). AAA stretches follow at residues 1651–1875 (YTYE…VLRG), 1938–2161 (ELSA…KQND), 2251–2505 (ADDF…WVLG), and 2617–2863 (HYGR…ESCK). ATP contacts are provided by residues 1689 to 1696 (GPAGTGKT), 1979 to 1986 (GPSGAGKS), 2291 to 2298 (GPEGCGKG), and 2655 to 2662 (GRSGVGRR). Positions 2881–3169 (AISSSKKKEL…AEVSKAQETI (289 aa)) are stalk. 3 coiled-coil regions span residues 2897–2982 (LQAG…KEVQ), 3109–3200 (LETE…LATL), and 3408–3442 (IQHE…SLLE). 2 AAA regions span residues 3244–3473 (LCTE…LIQE) and 3690–3905 (MALF…IIDR).

This sequence belongs to the dynein heavy chain family. In terms of assembly, the cytoplasmic dynein complex 2 is probably composed by a heavy chain DYNC2H1 homodimer and a number of DYNC2LI1 light intermediate chains.

The protein localises to the cytoplasm. The protein resides in the cytoskeleton. It is found in the cilium axoneme. Its subcellular location is the cell membrane. May function as a motor for intraflagellar retrograde transport. Functions in cilia biogenesis. May play a role in transport between endoplasmic reticulum and Golgi or organization of the Golgi in cells. The polypeptide is Cytoplasmic dynein 2 heavy chain 1 (DYNC2H1) (Homo sapiens (Human)).